A 356-amino-acid polypeptide reads, in one-letter code: UDP-3-O-acylglucosamine N-acyltransferase (356 aa).

The active-site Proton acceptor is the His242.

This sequence belongs to the transferase hexapeptide repeat family. LpxD subfamily. In terms of assembly, homotrimer.

It carries out the reaction a UDP-3-O-[(3R)-3-hydroxyacyl]-alpha-D-glucosamine + a (3R)-hydroxyacyl-[ACP] = a UDP-2-N,3-O-bis[(3R)-3-hydroxyacyl]-alpha-D-glucosamine + holo-[ACP] + H(+). It participates in bacterial outer membrane biogenesis; LPS lipid A biosynthesis. In terms of biological role, catalyzes the N-acylation of UDP-3-O-acylglucosamine using 3-hydroxyacyl-ACP as the acyl donor. Is involved in the biosynthesis of lipid A, a phosphorylated glycolipid that anchors the lipopolysaccharide to the outer membrane of the cell. The sequence is that of UDP-3-O-acylglucosamine N-acyltransferase from Acinetobacter baumannii (strain AB307-0294).